A 436-amino-acid chain; its full sequence is tRNA pseudouridine synthase Pus10 (436 aa).

The active-site Nucleophile is the aspartate 254. Residues tyrosine 322 and tyrosine 394 each coordinate substrate.

This sequence belongs to the pseudouridine synthase Pus10 family.

It carries out the reaction uridine(54) in tRNA = pseudouridine(54) in tRNA. The enzyme catalyses uridine(55) in tRNA = pseudouridine(55) in tRNA. Its function is as follows. Responsible for synthesis of pseudouridine from uracil-54 and uracil-55 in the psi GC loop of transfer RNAs. This chain is tRNA pseudouridine synthase Pus10, found in Methanopyrus kandleri (strain AV19 / DSM 6324 / JCM 9639 / NBRC 100938).